A 606-amino-acid chain; its full sequence is Ubiquitin-like modifier-activating enzyme ATG7 (606 aa).

Residues 316–321 carry the GXGXXG motif motif; sequence GSGTLG. The active-site Glycyl thioester intermediate is the cysteine 488. Positions 567 to 606 are homodimerization; sequence ALDDYKCVEKLSGLSKVQEEAELALEEDFDFSEDDEFVTG.

Belongs to the ATG7 family. In terms of assembly, homodimer. Interacts with ATG8 through a thioester bond between Cys-488 and the C-terminal Gly of ATG8 and with ATG12 through a thioester bond between Cys-488 and the C-terminal Gly of ATG12. Also interacts with ATG3.

The protein resides in the cytoplasm. Its subcellular location is the preautophagosomal structure. In terms of biological role, E1-like activating enzyme involved in the 2 ubiquitin-like systems required for cytoplasm to vacuole transport (Cvt) and autophagy. Activates ATG12 for its conjugation with ATG5 and ATG8 for its conjugation with phosphatidylethanolamine. Both systems are needed for the ATG8 association to Cvt vesicles and autophagosomes membranes. Autophagy is essential for maintenance of amino acid levels and protein synthesis under nitrogen starvation. Required for selective autophagic degradation of the nucleus (nucleophagy) as well as for mitophagy which contributes to regulate mitochondrial quantity and quality by eliminating the mitochondria to a basal level to fulfill cellular energy requirements and preventing excess ROS production. The protein is Ubiquitin-like modifier-activating enzyme ATG7 of Kluyveromyces marxianus (strain DMKU3-1042 / BCC 29191 / NBRC 104275) (Yeast).